The chain runs to 137 residues: Large ribosomal subunit protein uL16 (137 aa).

This sequence belongs to the universal ribosomal protein uL16 family. Part of the 50S ribosomal subunit.

Functionally, binds 23S rRNA and is also seen to make contacts with the A and possibly P site tRNAs. The polypeptide is Large ribosomal subunit protein uL16 (Wolbachia sp. subsp. Brugia malayi (strain TRS)).